The following is a 235-amino-acid chain: MHGFLGEFLGTMVLIVFGVGSGAAMNLKGNYARHQNWTFICLAWGLAVTFGVYVAGQFGSDGHLNPAVTVGFALFGYLPMANVWPYLLGQFLGAFIGAVIVIIQYYPHFQAAKTAADGNQVGIFATGPAISNPVFNFLSETIATFFFIFVLLNLGNFTQGLKPLMVGLLIVVVGQTLGGTTGFAINPARDWAPRLAYTILPVPNKGLANWGYAWVPMFGPLLGGILAAGLETIIS.

6 helical membrane-spanning segments follow: residues 4–24, 39–59, 62–82, 83–103, 134–154, and 165–185; these read FLGE…SGAA, FICL…GQFG, GHLN…PMAN, VWPY…IVII, VFNF…LLNL, and MVGL…GFAI. The NPA 1 signature appears at 65–67; that stretch reads NPA. Positions 186–188 match the NPA 2 motif; sequence NPA. A helical transmembrane segment spans residues 210–230; the sequence is WGYAWVPMFGPLLGGILAAGL.

This sequence belongs to the MIP/aquaporin (TC 1.A.8) family.

Its subcellular location is the cell membrane. In terms of biological role, transporter that facilitates the transmembrane diffusion of water, dihydroxyacetone, glycerol and H(2)O(2). Is not permeable to urea and D/L-lactic acid. This Lactiplantibacillus plantarum (strain ATCC BAA-793 / NCIMB 8826 / WCFS1) (Lactobacillus plantarum) protein is Glycerol uptake facilitator protein 2.